The sequence spans 249 residues: Triosephosphate isomerase (249 aa).

Position 8 to 10 (8 to 10 (NWK)) interacts with substrate. His95 acts as the Electrophile in catalysis. The active-site Proton acceptor is Glu163. Residues Gly169 and Ser209 each contribute to the substrate site.

Belongs to the triosephosphate isomerase family. In terms of assembly, homodimer.

It is found in the cytoplasm. It carries out the reaction D-glyceraldehyde 3-phosphate = dihydroxyacetone phosphate. It participates in carbohydrate biosynthesis; gluconeogenesis. It functions in the pathway carbohydrate degradation; glycolysis; D-glyceraldehyde 3-phosphate from glycerone phosphate: step 1/1. In terms of biological role, involved in the gluconeogenesis. Catalyzes stereospecifically the conversion of dihydroxyacetone phosphate (DHAP) to D-glyceraldehyde-3-phosphate (G3P). This is Triosephosphate isomerase from Orientia tsutsugamushi (strain Boryong) (Rickettsia tsutsugamushi).